The sequence spans 550 residues: Mitochondrial distribution and morphology protein 12 (550 aa).

An SMP-LTD domain is found at 1–550; it reads MSIDLNWETV…VYPSYWTFLV (550 aa). Disordered stretches follow at residues 76–97, 196–386, and 466–489; these read SDLA…DRRR, GHGH…KLRE, and ENEV…GGNG. The span at 83-92 shows a compositional bias: acidic residues; that stretch reads GSEEDEEEIA. Over residues 270-286 the composition is skewed to pro residues; that stretch reads PPFPPSSTGGPSPPPGL. Basic residues predominate over residues 288-305; that stretch reads KPHHPHHPHHHHAHHAHP. Basic and acidic residues predominate over residues 327–344; the sequence is PTRDKTTPSHHPDPEDVH. The segment covering 346 to 355 has biased composition (polar residues); that stretch reads PNTTTTNKQR. Over residues 356–371 the composition is skewed to low complexity; sequence STSPATSSPLATSAQE.

It belongs to the MDM12 family. In terms of assembly, component of the ER-mitochondria encounter structure (ERMES) or MDM complex, composed of MMM1, MDM10, MDM12 and MDM34. An MMM1 homodimer associates with one molecule of MDM12 on each side in a pairwise head-to-tail manner, and the SMP-LTD domains of MMM1 and MDM12 generate a continuous hydrophobic tunnel for phospholipid trafficking.

Its subcellular location is the mitochondrion outer membrane. It localises to the endoplasmic reticulum membrane. Component of the ERMES/MDM complex, which serves as a molecular tether to connect the endoplasmic reticulum (ER) and mitochondria. Components of this complex are involved in the control of mitochondrial shape and protein biogenesis, and function in nonvesicular lipid trafficking between the ER and mitochondria. MDM12 is required for the interaction of the ER-resident membrane protein MMM1 and the outer mitochondrial membrane-resident beta-barrel protein MDM10. The MDM12-MMM1 subcomplex functions in the major beta-barrel assembly pathway that is responsible for biogenesis of all mitochondrial outer membrane beta-barrel proteins, and acts in a late step after the SAM complex. The MDM10-MDM12-MMM1 subcomplex further acts in the TOM40-specific pathway after the action of the MDM12-MMM1 complex. Essential for establishing and maintaining the structure of mitochondria and maintenance of mtDNA nucleoids. The protein is Mitochondrial distribution and morphology protein 12 of Podospora anserina (strain S / ATCC MYA-4624 / DSM 980 / FGSC 10383) (Pleurage anserina).